A 692-amino-acid polypeptide reads, in one-letter code: Transcription factor steA (692 aa).

A DNA-binding region spans residues 56-165; that stretch reads DQLIRRFLLP…SVPHDRLFLD (110 aa). Disordered stretches follow at residues 406 to 507 and 519 to 540; these read SPTY…EQSS and LPAN…SDRY. Over residues 470-482 the composition is skewed to polar residues; sequence RSVNSTYTATLPQ. 2 consecutive C2H2-type zinc fingers follow at residues 564–588 and 594–616; these read HSCP…VRTH and YPCP…RRIH. The segment at 618 to 665 is disordered; it reads AQQDGQPLVHEDDLENDDNESVSHDEDESPSESVHPAVPGVHGMTSMP. A compositionally biased stretch (acidic residues) spans 629 to 647; the sequence is DDLENDDNESVSHDEDESP.

This sequence belongs to the STE12 transcription factor family.

It is found in the nucleus. Transcription factor involved in sexual reproduction. Required for cleistothecial development and ascosporogenesis. Not required for asexual reproduction (conidiation). May act to repress medA expression. The sequence is that of Transcription factor steA (steA) from Emericella nidulans (strain FGSC A4 / ATCC 38163 / CBS 112.46 / NRRL 194 / M139) (Aspergillus nidulans).